The chain runs to 601 residues: MKHSASESKPLSSGLAIYRRLLRYGFPYWRSFCVAVVAMIAYAAITPFFAKLIQPLIDGSFIDNDPTVLRQVSLMLIGLSVLRGIAGFLSEYCSGSVGRRVIADLRRDIFDQLLNLPCSFYDNASGGQLLSKLLYNTEQVSASLQQGIITCIREGFTVIGLMALMVYQNPVLSLVFLVLGPVLGLSVRFVSKRFRRLSMRIQESMGKVSHVTQEVIDAQRIVKVFNGKDYEAAKFATENDRNQKRQMKLIATDALGGGVIHLISVAGVAGILYVVSLDSVRQTITPGSLMAFIAAMAMMLSPIRRLSQVVSVMQRGIAAGDSIFAMLDLPRERDRGRISLKRARGSIEYRHVSLVYDDRHGAAVDDVSLVIPAGKTVALVGQSGSGKTSLVRLLPRLYEATAGEILIDGHDIRELTLESLRRQIAYVGQEVTLFNDTVASNIAYGCLDRVGLDAVREAARAANALDFIETLPQGFDTLVGQQGIVLSGGQRQRIAIARALLKNAPILILDEATSALDAESERYVQQALEVLMQNRTTLVIAHRLSTIQNADQICVMRGGRIIECGTHAQLMAARGGYADLYAMQFGYSSVPEAVAVHAVRR.

5 consecutive transmembrane segments (helical) span residues 33 to 53, 72 to 92, 158 to 178, 255 to 275, and 283 to 303; these read CVAVVAMIAYAAITPFFAKLI, VSLMLIGLSVLRGIAGFLSEY, VIGLMALMVYQNPVLSLVFLV, LGGGVIHLISVAGVAGILYVV, and TITPGSLMAFIAAMAMMLSPI. Residues 34-315 enclose the ABC transmembrane type-1 domain; sequence VAVVAMIAYA…LSQVVSVMQR (282 aa). The ABC transporter domain maps to 347 to 583; sequence IEYRHVSLVY…RGGYADLYAM (237 aa). Position 381-388 (381-388) interacts with ATP; that stretch reads GQSGSGKT.

Belongs to the ABC transporter superfamily. Lipid exporter (TC 3.A.1.106) family. As to quaternary structure, homodimer.

It localises to the cell inner membrane. The catalysed reaction is ATP + H2O + lipid A-core oligosaccharideSide 1 = ADP + phosphate + lipid A-core oligosaccharideSide 2.. Functionally, involved in lipopolysaccharide (LPS) biosynthesis. Translocates lipid A-core from the inner to the outer leaflet of the inner membrane. Transmembrane domains (TMD) form a pore in the inner membrane and the ATP-binding domain (NBD) is responsible for energy generation. The chain is ATP-dependent lipid A-core flippase from Methylococcus capsulatus (strain ATCC 33009 / NCIMB 11132 / Bath).